Consider the following 209-residue polypeptide: Claudin-4 (209 aa).

Over 1–9 (MASMGLQVM) the chain is Cytoplasmic. Residues 1 to 103 (MASMGLQVMG…GVLLSVVGGK (103 aa)) are interaction with EPHA2. A helical transmembrane segment spans residues 10–30 (GIALAVLGWLGAILSCALPMW). The Extracellular portion of the chain corresponds to 31-81 (RVTAFIGSNIVTSQTIWEGLWMNCVVQSTGQMQCKVYDSLLALPQDLQAAR). C54 and C64 are joined by a disulfide. The chain crosses the membrane as a helical span at residues 82-102 (ALIVICIILAVFGVLLSVVGG). At 103–117 (KCTNCVDDESSKAKI) the chain is on the cytoplasmic side. The chain crosses the membrane as a helical span at residues 118 to 138 (MIVAGVVFLLAGLLVMVPVSW). Residues 139–160 (TANNVIRDFYNPLVASGQKREM) lie on the Extracellular side of the membrane. A helical membrane pass occupies residues 161–181 (GASLYVGWAAAGLLILGGALL). Residues 182 to 209 (CFNCPPRNDKPYSAKYSAARSAPASNYV) are Cytoplasmic-facing. At Y208 the chain carries Phosphotyrosine; by EPHA2. The interval 208–209 (YV) is interactions with TJP1, TJP2 and TJP3.

This sequence belongs to the claudin family. As to quaternary structure, interacts with EPHA2; phosphorylates CLDN4 and may regulate tight junctions. Directly interacts with TJP1/ZO-1, TJP2/ZO-2 and TJP3/ZO-3. Interacts with CLDN1. Interacts with CLDN8. In terms of processing, phosphorylated. Phosphorylation by EPHA2 is stimulated by EFNA1 and alters interaction with TJP1.

It localises to the cell junction. The protein localises to the tight junction. Its subcellular location is the cell membrane. Channel-forming tight junction protein that mediates paracellular chloride transport in the kidney. Plays a critical role in the paracellular reabsorption of filtered chloride in the kidney collecting ducts. Claudins play a major role in tight junction-specific obliteration of the intercellular space, through calcium-independent cell-adhesion activity. This Bos taurus (Bovine) protein is Claudin-4 (CLDN4).